A 323-amino-acid chain; its full sequence is Pantothenate kinase (323 aa).

Residue 101–108 (GSVAVGKS) participates in ATP binding.

Belongs to the prokaryotic pantothenate kinase family.

It localises to the cytoplasm. It catalyses the reaction (R)-pantothenate + ATP = (R)-4'-phosphopantothenate + ADP + H(+). It functions in the pathway cofactor biosynthesis; coenzyme A biosynthesis; CoA from (R)-pantothenate: step 1/5. This Xanthobacter autotrophicus (strain ATCC BAA-1158 / Py2) protein is Pantothenate kinase.